Consider the following 324-residue polypeptide: Quinolinate synthase (324 aa).

Iminosuccinate contacts are provided by His-39 and Ser-56. Residue Cys-101 participates in [4Fe-4S] cluster binding. Residues 127–129 and Ser-144 contribute to the iminosuccinate site; that span reads YIN. Residue Cys-187 coordinates [4Fe-4S] cluster. Iminosuccinate contacts are provided by residues 213 to 215 and Thr-230; that span reads HPE. Residue Cys-280 coordinates [4Fe-4S] cluster.

Belongs to the quinolinate synthase family. Type 2 subfamily. [4Fe-4S] cluster is required as a cofactor.

The protein localises to the cytoplasm. The catalysed reaction is iminosuccinate + dihydroxyacetone phosphate = quinolinate + phosphate + 2 H2O + H(+). It participates in cofactor biosynthesis; NAD(+) biosynthesis; quinolinate from iminoaspartate: step 1/1. In terms of biological role, catalyzes the condensation of iminoaspartate with dihydroxyacetone phosphate to form quinolinate. In Trichormus variabilis (strain ATCC 29413 / PCC 7937) (Anabaena variabilis), this protein is Quinolinate synthase.